Reading from the N-terminus, the 156-residue chain is MKLQLVAVGTKMPDWVQTGFMDYLHRFPKDMPFELTEIPAGKRGKNADIKRILEKEGEQMLAAVGKGNRIVTLDIPGTPWETPQLAQQLERWKQDGRNVSLLIGGPEGLAPACKAAAEQSWSLSPLTLPHPLVRVLVAESLYRAWSITTNHPYHRE.

S-adenosyl-L-methionine is bound by residues leucine 73, glycine 104, and 123 to 128; that span reads LSPLTL.

This sequence belongs to the RNA methyltransferase RlmH family. Homodimer.

Its subcellular location is the cytoplasm. The enzyme catalyses pseudouridine(1915) in 23S rRNA + S-adenosyl-L-methionine = N(3)-methylpseudouridine(1915) in 23S rRNA + S-adenosyl-L-homocysteine + H(+). Specifically methylates the pseudouridine at position 1915 (m3Psi1915) in 23S rRNA. In Serratia proteamaculans (strain 568), this protein is Ribosomal RNA large subunit methyltransferase H.